The chain runs to 466 residues: 3-isopropylmalate dehydratase large subunit (466 aa).

[4Fe-4S] cluster contacts are provided by C347, C407, and C410.

This sequence belongs to the aconitase/IPM isomerase family. LeuC type 1 subfamily. In terms of assembly, heterodimer of LeuC and LeuD. Requires [4Fe-4S] cluster as cofactor.

It carries out the reaction (2R,3S)-3-isopropylmalate = (2S)-2-isopropylmalate. It functions in the pathway amino-acid biosynthesis; L-leucine biosynthesis; L-leucine from 3-methyl-2-oxobutanoate: step 2/4. Catalyzes the isomerization between 2-isopropylmalate and 3-isopropylmalate, via the formation of 2-isopropylmaleate. The chain is 3-isopropylmalate dehydratase large subunit from Escherichia coli O127:H6 (strain E2348/69 / EPEC).